The following is a 129-amino-acid chain: Large ribosomal subunit protein bL12 (129 aa).

This sequence belongs to the bacterial ribosomal protein bL12 family. As to quaternary structure, homodimer. Part of the ribosomal stalk of the 50S ribosomal subunit. Forms a multimeric L10(L12)X complex, where L10 forms an elongated spine to which 2 to 4 L12 dimers bind in a sequential fashion. Binds GTP-bound translation factors.

Its function is as follows. Forms part of the ribosomal stalk which helps the ribosome interact with GTP-bound translation factors. Is thus essential for accurate translation. The polypeptide is Large ribosomal subunit protein bL12 (Synechococcus sp. (strain CC9605)).